Consider the following 622-residue polypeptide: Chaperone protein HscA homolog (622 aa).

The protein belongs to the heat shock protein 70 family.

In terms of biological role, chaperone involved in the maturation of iron-sulfur cluster-containing proteins. Has a low intrinsic ATPase activity which is markedly stimulated by HscB. This Burkholderia orbicola (strain MC0-3) protein is Chaperone protein HscA homolog.